The primary structure comprises 162 residues: MRRAVCPGSFDPVTNGHLDIIGRASRLFDEVIVGVLINQSKTGLFTVDERIDMLREVVRSYDNVRVESFRGLLVDFCHAQQASVLIKGLRAVSDFDYELQMAQMNIGLAGVETLFMPTNPLYSFLSSSLVKDVAKWGGDISAHVPEVVRGALLARLDPPSRR.

Serine 9 is a binding site for substrate. ATP-binding positions include 9 to 10 (SF) and histidine 17. Positions 41, 73, and 87 each coordinate substrate. ATP contacts are provided by residues 88 to 90 (GLR), glutamate 98, and 122 to 128 (YSFLSSS).

The protein belongs to the bacterial CoaD family. Homohexamer. The cofactor is Mg(2+).

Its subcellular location is the cytoplasm. The catalysed reaction is (R)-4'-phosphopantetheine + ATP + H(+) = 3'-dephospho-CoA + diphosphate. It functions in the pathway cofactor biosynthesis; coenzyme A biosynthesis; CoA from (R)-pantothenate: step 4/5. Its function is as follows. Reversibly transfers an adenylyl group from ATP to 4'-phosphopantetheine, yielding dephospho-CoA (dPCoA) and pyrophosphate. The chain is Phosphopantetheine adenylyltransferase from Salinispora tropica (strain ATCC BAA-916 / DSM 44818 / JCM 13857 / NBRC 105044 / CNB-440).